The primary structure comprises 93 residues: Small ribosomal subunit protein uS19 (93 aa).

Belongs to the universal ribosomal protein uS19 family.

In terms of biological role, protein S19 forms a complex with S13 that binds strongly to the 16S ribosomal RNA. This Alkaliphilus metalliredigens (strain QYMF) protein is Small ribosomal subunit protein uS19.